Reading from the N-terminus, the 207-residue chain is Testis-expressed protein 35 (207 aa).

Residues 43–79 (RKGMTRELKNELREVREQLTEKMEEIKQIKDIMDKDF) adopt a coiled-coil conformation.

As to expression, testis-specific. Expressed during spermatogenesis.

The protein localises to the nucleus. The protein is Testis-expressed protein 35 (Tex35) of Mus musculus (Mouse).